The chain runs to 189 residues: uncharacterized protein (189 aa).

This sequence belongs to the mimivirus R457/R459 family.

Its subcellular location is the virion. This is an uncharacterized protein from Acanthamoeba polyphaga mimivirus (APMV).